The sequence spans 538 residues: Putative cysteine ligase BshC (538 aa).

Positions 248–268 (ISKYKEVQEGLRNQQEVIKEL) form a coiled coil.

Belongs to the BshC family.

Involved in bacillithiol (BSH) biosynthesis. May catalyze the last step of the pathway, the addition of cysteine to glucosamine malate (GlcN-Mal) to generate BSH. This Bacillus cereus (strain G9842) protein is Putative cysteine ligase BshC.